Consider the following 396-residue polypeptide: Elongation factor Tu (396 aa).

Positions 10-206 (KPHCNIGTIG…AVDAYIPQPE (197 aa)) constitute a tr-type G domain. The segment at 19–26 (GHVDHGKT) is G1. 19–26 (GHVDHGKT) lines the GTP pocket. T26 lines the Mg(2+) pocket. The segment at 60–64 (GITIS) is G2. Positions 81–84 (DCPG) are G3. Residues 81 to 85 (DCPGH) and 136 to 139 (NKCD) contribute to the GTP site. Residues 136 to 139 (NKCD) form a G4 region. The interval 174–176 (SAL) is G5.

Belongs to the TRAFAC class translation factor GTPase superfamily. Classic translation factor GTPase family. EF-Tu/EF-1A subfamily. As to quaternary structure, monomer.

Its subcellular location is the cytoplasm. It catalyses the reaction GTP + H2O = GDP + phosphate + H(+). Its function is as follows. GTP hydrolase that promotes the GTP-dependent binding of aminoacyl-tRNA to the A-site of ribosomes during protein biosynthesis. This Rhodopseudomonas palustris (strain HaA2) protein is Elongation factor Tu.